We begin with the raw amino-acid sequence, 328 residues long: MKQPVRVAVTGAAGQIGYSLLFRIASGEMLGKDQPVILQLLEIPVEKAQQALKGVMMELDDCAFPLLAGMIGTDDPKVAFKDADYALLVGSRPRGPGMERADLLKVNGEIFIGQGQALNEVASRDVKVLVVGNPANTNAYIAMKSAPDLPAKNFTAMLRLDHNRALTQIAQKAGVAVADIEKLTVWGNHSPTMYADYRFATANGENLKDKINDAEWNKDVFLPTVGKRGAAIIEARGLSSAASAANAAIDHMRDWALGTNGKWVTMGIPSDGSYGIPEGVIYGVPVTCENGEYKRVEGLEIDEFSRERMDKTLQELEEERAAIADMLK.

Residue 11–17 (GAAGQIG) participates in NAD(+) binding. Residues arginine 94 and arginine 100 each coordinate substrate. Residues asparagine 107, glutamine 114, and 131–133 (VGN) each bind NAD(+). The substrate site is built by asparagine 133 and arginine 164. Catalysis depends on histidine 189, which acts as the Proton acceptor.

It belongs to the LDH/MDH superfamily. MDH type 2 family.

It catalyses the reaction (S)-malate + NAD(+) = oxaloacetate + NADH + H(+). Functionally, catalyzes the reversible oxidation of malate to oxaloacetate. This Acinetobacter baylyi (strain ATCC 33305 / BD413 / ADP1) protein is Malate dehydrogenase.